A 362-amino-acid chain; its full sequence is UDP-N-acetylglucosamine--N-acetylmuramyl-(pentapeptide) pyrophosphoryl-undecaprenol N-acetylglucosamine transferase (362 aa).

Residues 15 to 17, Asn127, Arg165, Ser191, Ile247, 266 to 271, and Gln292 each bind UDP-N-acetyl-alpha-D-glucosamine; these read TGG and ALTVSE.

Belongs to the glycosyltransferase 28 family. MurG subfamily.

The protein resides in the cell inner membrane. It catalyses the reaction di-trans,octa-cis-undecaprenyl diphospho-N-acetyl-alpha-D-muramoyl-L-alanyl-D-glutamyl-meso-2,6-diaminopimeloyl-D-alanyl-D-alanine + UDP-N-acetyl-alpha-D-glucosamine = di-trans,octa-cis-undecaprenyl diphospho-[N-acetyl-alpha-D-glucosaminyl-(1-&gt;4)]-N-acetyl-alpha-D-muramoyl-L-alanyl-D-glutamyl-meso-2,6-diaminopimeloyl-D-alanyl-D-alanine + UDP + H(+). It participates in cell wall biogenesis; peptidoglycan biosynthesis. Cell wall formation. Catalyzes the transfer of a GlcNAc subunit on undecaprenyl-pyrophosphoryl-MurNAc-pentapeptide (lipid intermediate I) to form undecaprenyl-pyrophosphoryl-MurNAc-(pentapeptide)GlcNAc (lipid intermediate II). The sequence is that of UDP-N-acetylglucosamine--N-acetylmuramyl-(pentapeptide) pyrophosphoryl-undecaprenol N-acetylglucosamine transferase from Shewanella oneidensis (strain ATCC 700550 / JCM 31522 / CIP 106686 / LMG 19005 / NCIMB 14063 / MR-1).